A 212-amino-acid polypeptide reads, in one-letter code: Protein G1-like7 (212 aa).

Over residues 1–22 (MDPSGPGPSSAAAGGAPAVAAA) the composition is skewed to low complexity. Disordered regions lie at residues 1 to 34 (MDPS…RYES) and 148 to 212 (KARG…PSAS). The ALOG domain maps to 31-158 (RYESQKRRDW…ARGIPYEKKK (128 aa)). Residues 156 to 160 (KKKRK) carry the Nuclear localization signal motif. The span at 167 to 182 (PAGVEPSGSSSAAAAA) shows a compositional bias: low complexity. Over residues 183-194 (AGGGDAGSGGGA) the composition is skewed to gly residues. Over residues 195-212 (AATTTAQPGGSGTAPSAS) the composition is skewed to low complexity.

It belongs to the plant homeotic and developmental regulators ALOG protein family.

The protein localises to the nucleus. In terms of biological role, probable transcription regulator that acts as a developmental regulator by promoting cell growth in response to light. In Oryza sativa subsp. japonica (Rice), this protein is Protein G1-like7 (G1L7).